Reading from the N-terminus, the 815-residue chain is Lon protease 1 (815 aa).

In terms of domain architecture, Lon N-terminal spans 14–211 (IAILPLLGTV…KLNEVLTREL (198 aa)). 370 to 377 (GPPGVGKT) lines the ATP pocket. One can recognise a Lon proteolytic domain in the interval 606-787 (TDRPGIVTGL…GQVIELALRA (182 aa)). Residues Ser693 and Lys736 contribute to the active site.

This sequence belongs to the peptidase S16 family. As to quaternary structure, homohexamer. Organized in a ring with a central cavity.

It is found in the cytoplasm. It catalyses the reaction Hydrolysis of proteins in presence of ATP.. Functionally, ATP-dependent serine protease that mediates the selective degradation of mutant and abnormal proteins as well as certain short-lived regulatory proteins. Required for cellular homeostasis and for survival from DNA damage and developmental changes induced by stress. Degrades polypeptides processively to yield small peptide fragments that are 5 to 10 amino acids long. Binds to DNA in a double-stranded, site-specific manner. This is Lon protease 1 from Herpetosiphon aurantiacus (strain ATCC 23779 / DSM 785 / 114-95).